A 326-amino-acid polypeptide reads, in one-letter code: Protein-ribulosamine 3-kinase, chloroplastic (326 aa).

The N-terminal 30 residues, 1 to 30 (MAVASLSICFSARPHLLLRNFSPRPKFVAM), are a transit peptide targeting the chloroplast. 125 to 127 (EFI) serves as a coordination point for ATP. Catalysis depends on Asp230, which acts as the Proton acceptor.

It belongs to the fructosamine kinase family.

The protein localises to the plastid. It is found in the chloroplast. The enzyme catalyses N(6)-D-ribulosyl-L-lysyl-[protein] + ATP = N(6)-(3-O-phospho-D-ribulosyl)-L-lysyl-[protein] + ADP + H(+). The catalysed reaction is N(6)-(D-erythrulosyl)-L-lysyl-[protein] + ATP = N(6)-(3-O-phospho-D-erythrulosyl)-L-lysyl-[protein] + ADP + H(+). Initiates a process leading to the deglycation of proteins. Phosphorylates low-molecular-mass and protein-bound erythrulosamines and ribulosamines, but not fructosamines or psicosamines, on the third carbon of the sugar moiety. Protein-bound erythrulosamine 3-phosphates and ribulosamine 3-phosphates are unstable and decompose under physiological conditions. The chain is Protein-ribulosamine 3-kinase, chloroplastic from Arabidopsis thaliana (Mouse-ear cress).